The following is a 323-amino-acid chain: MEDGSVSYGFKNIFITMFATFFFFKLLIKVFLALLTHFYIVKGNRKEAARIAEEIFGEISDCWADRSPLHEAAAQGRLLALKTLIAQGVNVNLVTINRVSSLHEACLGGHVACAKALLENGAHVNGVTVHGATPLFNACCSGSAACVNVLLEFGAKAQLEVHLASPIHEAVKRGNRECMEILLANNVNIDQEVPHLGTPLYAACTYQRLDCVKKLLELGANVNHGQWLDTPLHAAAKQNSVEIIHLLIDYGANLKCKNAQGQSALDLAAPKSSVEQALLLREGPPALSQLCRLCVRKCLGRNCHKTIHKLYLPDPLEKFLLYQ.

6 ANK repeats span residues 64–93, 97–126, 130–159, 162–191, 195–224, and 227–256; these read ADRS…NVNL, NRVS…HVNG, HGAT…KAQL, HLAS…NIDQ, HLGT…NVNH, and WLDT…NLKC. Residues 273 to 323 form the SOCS box domain; sequence SVEQALLLREGPPALSQLCRLCVRKCLGRNCHKTIHKLYLPDPLEKFLLYQ.

Belongs to the ankyrin SOCS box (ASB) family. In terms of assembly, substrate-recognition component of the ECS(ASB11) complex, composed of ASB11, CUL5, ELOB, ELOC and RNF7/RBX2.

The protein resides in the endoplasmic reticulum. Its pathway is protein modification; protein ubiquitination. Substrate-recognition component of a cullin-5-RING E3 ubiquitin-protein ligase complex (ECS complex, also named CRL5 complex), which mediates the ubiquitination and subsequent proteasomal degradation of target proteins, such as BIK, DIRAS2 and RPN1. The ECS(ASB11) complex acts as a regulator of the endoplasmic reticulum unfolded protein response by mediating ubiquitination and degradation of BIK. In Bos taurus (Bovine), this protein is Ankyrin repeat and SOCS box protein 11 (ASB11).